The sequence spans 509 residues: Steroid 17-alpha-hydroxylase/17,20 lyase (509 aa).

Asn-202 lines the substrate pocket. Cys-442 is a heme binding site.

It belongs to the cytochrome P450 family. Requires heme as cofactor.

It is found in the endoplasmic reticulum membrane. Its subcellular location is the microsome membrane. The catalysed reaction is a C21-steroid + reduced [NADPH--hemoprotein reductase] + O2 = a 17alpha-hydroxy-C21-steroid + oxidized [NADPH--hemoprotein reductase] + H2O + H(+). The enzyme catalyses progesterone + reduced [NADPH--hemoprotein reductase] + O2 = 17alpha-hydroxyprogesterone + oxidized [NADPH--hemoprotein reductase] + H2O + H(+). It catalyses the reaction pregnenolone + reduced [NADPH--hemoprotein reductase] + O2 = 17alpha-hydroxypregnenolone + oxidized [NADPH--hemoprotein reductase] + H2O + H(+). It carries out the reaction 17alpha-hydroxyprogesterone + reduced [NADPH--hemoprotein reductase] + O2 = androst-4-ene-3,17-dione + acetate + oxidized [NADPH--hemoprotein reductase] + H2O + 2 H(+). The catalysed reaction is 17alpha-hydroxyprogesterone + reduced [NADPH--hemoprotein reductase] + O2 = 16alpha,17alpha-dihydroxyprogesterone + oxidized [NADPH--hemoprotein reductase] + H2O + H(+). The enzyme catalyses 16alpha,17alpha-dihydroxyprogesterone + reduced [NADPH--hemoprotein reductase] + O2 = 6beta,16alpha,17alpha-trihydroxyprogesterone + oxidized [NADPH--hemoprotein reductase] + H2O + H(+). It catalyses the reaction 17alpha-hydroxypregnenolone + reduced [NADPH--hemoprotein reductase] + O2 = 3beta-hydroxyandrost-5-en-17-one + acetate + oxidized [NADPH--hemoprotein reductase] + H2O + 2 H(+). It carries out the reaction 16alpha,17alpha-dihydroxypregnenolone + reduced [NADPH--hemoprotein reductase] + O2 = 3beta,16alpha-dihydroxy-androst-5-en-17-one + acetate + oxidized [NADPH--hemoprotein reductase] + H2O + 2 H(+). The catalysed reaction is 3beta-hydroxyandrost-5-en-17-one + reduced [NADPH--hemoprotein reductase] + O2 = 3beta,16alpha-dihydroxy-androst-5-en-17-one + oxidized [NADPH--hemoprotein reductase] + H2O + H(+). The enzyme catalyses androst-4-ene-3,17-dione + reduced [NADPH--hemoprotein reductase] + O2 = 16alpha-hydroxyandrost-4-ene-3,17-dione + oxidized [NADPH--hemoprotein reductase] + H2O + H(+). The protein operates within steroid hormone biosynthesis. It participates in steroid biosynthesis; glucocorticoid biosynthesis. With respect to regulation, regulated predominantly by intracellular cAMP levels. The 17,20-lyase activity is stimulated by cytochrome b5, which acts as an allosteric effector increasing the Vmax of the lyase activity. A cytochrome P450 monooxygenase involved in corticoid and androgen biosynthesis. Catalyzes 17-alpha hydroxylation of C21 steroids, which is common for both pathways. A second oxidative step, required only for androgen synthesis, involves an acyl-carbon cleavage. The 17-alpha hydroxy intermediates, as part of adrenal glucocorticoids biosynthesis pathway, are precursors of cortisol. Hydroxylates steroid hormones, pregnenolone and progesterone to form 17-alpha hydroxy metabolites, followed by the cleavage of the C17-C20 bond to form C19 steroids, dehydroepiandrosterone (DHEA) and androstenedione. Has 16-alpha hydroxylase activity. Catalyzes 16-alpha hydroxylation of 17-alpha hydroxy pregnenolone, followed by the cleavage of the C17-C20 bond to form 16-alpha-hydroxy DHEA. Also 16-alpha hydroxylates androgens, relevant for estriol synthesis. Mechanistically, uses molecular oxygen inserting one oxygen atom into a substrate, and reducing the second into a water molecule, with two electrons provided by NADPH via cytochrome P450 reductase (CPR; NADPH-ferrihemoprotein reductase). In Bison bison (American bison), this protein is Steroid 17-alpha-hydroxylase/17,20 lyase (CYP17A1).